Reading from the N-terminus, the 766-residue chain is MPRQFPKLNMSDLDEHVRLLAEKVFAKVLREEDSKDVMSLFTVPEDCPIGQKEAKERELQKELAEQKSVETAKRKKSFKMIRSQSLSLQMPTQQDWKGPPTASPAMSPATPLVPGATSKPGPAPYAMPEYQRVTISGDYCAGITVEDYEQAAKSLAKALMIREKYARLAYHRFPRTTAQYLAHQGESVPLEEGLPDFHPPPLPQEDPYCLDDAPPNLGYLVRMHGGVLFVYDNQTMLERQEPHSLPYPDLETYIVDMSHILALITDGPTKTYCHRRLNFLESKFSLHEMLNEMSEFKELKSNPHRDFYNVRKVDTHIHAAACMNQKHLLRFIKHTYQTEPDRTVAEKLGRKITLRQVFDSLHMDPYDLTVDSLDVHAGRQTFHRFDKFNSKYNPVGASELRDLYLKTENYLGGEYFARMVKEVARELEDSKYQYSEPRLSIYGRSPKEWSSLARWFIQHKVYSPNMRWIIQVPRIYDIFRSKKLLPNFGKMLENIFLPLFKATINPQDHRELHLFLKYVTGFDSVDDESKHSDHMFSDKSPSPDLWTSEQNPPYSYYLYYMYANIMVLNNLRRERGLSTFLFRPHCGEAGSITHLVSAFLTADNISHGLLLKKSPVLQYLYYLAQIPIAMSPLSNNSLFLEYSKNPLREFLHKGLHVSLSTDDPMQFHYTKEALMEEYAIAAQVWKLSTCDLCEIARNSVLQSGLSHQEKQKFLGQNYYKEGPEGNDIRKTNVAQIRMAFRYETLCNELSFLSDAMKSEEITALTK.

Phosphoserine occurs at positions 85 and 107. Positions 89–114 (QMPTQQDWKGPPTASPAMSPATPLVP) are disordered. The segment covering 99–110 (PPTASPAMSPAT) has biased composition (low complexity). Residues H316 and H318 each contribute to the Zn(2+) site. Substrate is bound by residues H318 and 387–392 (KFNSKY). H585 contacts Zn(2+). E588 lines the substrate pocket. H607 functions as the Proton acceptor in the catalytic mechanism. Position 662 (D662) interacts with Zn(2+). Position 663–666 (663–666 (DPMQ)) interacts with substrate.

Belongs to the metallo-dependent hydrolases superfamily. Adenosine and AMP deaminases family. As to quaternary structure, homotetramer. Zn(2+) is required as a cofactor. Found in heart, lung brain, spleen, kidney and to a lesser extent in liver.

It catalyses the reaction AMP + H2O + H(+) = IMP + NH4(+). Its pathway is purine metabolism; IMP biosynthesis via salvage pathway; IMP from AMP: step 1/1. Its function is as follows. AMP deaminase plays a critical role in energy metabolism. In Mus musculus (Mouse), this protein is AMP deaminase 3.